A 293-amino-acid chain; its full sequence is N-acetylneuraminate lyase (293 aa).

Aceneuramate is bound by residues Ser-47, Thr-48, and Tyr-136. Tyr-136 acts as the Proton donor in catalysis. The Schiff-base intermediate with substrate role is filled by Lys-164. Aceneuramate contacts are provided by Thr-166, Gly-188, Asp-190, Glu-191, Ser-207, and Tyr-251.

It belongs to the DapA family. NanA subfamily. In terms of assembly, homotetramer.

The protein localises to the cytoplasm. The catalysed reaction is aceneuramate = aldehydo-N-acetyl-D-mannosamine + pyruvate. The protein operates within amino-sugar metabolism; N-acetylneuraminate degradation; D-fructose 6-phosphate from N-acetylneuraminate: step 1/5. Functionally, catalyzes the reversible aldol cleavage of N-acetylneuraminic acid (sialic acid; Neu5Ac) to form pyruvate and N-acetylmannosamine (ManNAc) via a Schiff base intermediate. The protein is N-acetylneuraminate lyase of Pasteurella multocida (strain Pm70).